The following is a 398-amino-acid chain: Acetate kinase 1 (398 aa).

Mg(2+) is bound at residue Asn10. Residue Lys17 participates in ATP binding. Arg89 contacts substrate. Residue Asp146 is the Proton donor/acceptor of the active site. ATP is bound by residues 206–210, 281–283, and 329–333; these read HLGNG, DCR, and GIGEN. Position 384 (Glu384) interacts with Mg(2+).

The protein belongs to the acetokinase family. As to quaternary structure, homodimer. The cofactor is Mg(2+). It depends on Mn(2+) as a cofactor.

The protein localises to the cytoplasm. It catalyses the reaction acetate + ATP = acetyl phosphate + ADP. It participates in metabolic intermediate biosynthesis; acetyl-CoA biosynthesis; acetyl-CoA from acetate: step 1/2. Functionally, catalyzes the formation of acetyl phosphate from acetate and ATP. Can also catalyze the reverse reaction. In Neisseria meningitidis serogroup A / serotype 4A (strain DSM 15465 / Z2491), this protein is Acetate kinase 1.